The sequence spans 332 residues: Ferredoxin--NADP reductase (332 aa).

The FAD site is built by Thr20, Glu39, Gln47, Tyr52, Val92, Phe126, Asp288, and Ser329.

Belongs to the ferredoxin--NADP reductase type 2 family. As to quaternary structure, homodimer. FAD is required as a cofactor.

The catalysed reaction is 2 reduced [2Fe-2S]-[ferredoxin] + NADP(+) + H(+) = 2 oxidized [2Fe-2S]-[ferredoxin] + NADPH. This is Ferredoxin--NADP reductase from Geobacillus thermodenitrificans (strain NG80-2).